A 401-amino-acid polypeptide reads, in one-letter code: MTENISNSSTQQLLALRVMRLARPKFAPLDGFSHDPVDPTGFGELLAGKVAEISKESRHDLPIGEYLIAPQMFENIYLGETFTFYVNVVNESESNVVNVSLKCELQTSTQRVVLPCSVQDVTIESTKCDGQVISHEVKEIGQHILICSVNYKTLSGENMYFRKFFKFPVSKPIDVKTKFYSAEDNANQDVYLEAQIENTSNSNMFLERVELDPSQHYKVTSISHEDEFPEVGKLLKPKDIRQFLFCLSPVDVNNTLGYKDLTSIGKLDMSWRTSMGEKGRLQTSALQRIAPGYGDVRLSVEKTPACVDVQKPFEVACRLYNCSERALDLQLRLEQPSNRQLVICSPSGVSLGQLPPSRYVDFALNVFPVAVGIQSISGIRITDTFTKRHYEHDDIAQIFVS.

This sequence belongs to the TRAPPC13 family.

The chain is Probable trafficking protein particle complex subunit 13 homolog from Caenorhabditis briggsae.